We begin with the raw amino-acid sequence, 465 residues long: Cysteine--tRNA ligase (465 aa).

Cys-27 is a binding site for Zn(2+). The 'HIGH' region signature appears at 29 to 39 (PTTYNYIHIGN). 3 residues coordinate Zn(2+): Cys-207, His-232, and Glu-236. Positions 264–268 (KMSKS) match the 'KMSKS' region motif. Lys-267 contributes to the ATP binding site.

This sequence belongs to the class-I aminoacyl-tRNA synthetase family. As to quaternary structure, monomer. Zn(2+) serves as cofactor.

The protein resides in the cytoplasm. The catalysed reaction is tRNA(Cys) + L-cysteine + ATP = L-cysteinyl-tRNA(Cys) + AMP + diphosphate. The chain is Cysteine--tRNA ligase from Carboxydothermus hydrogenoformans (strain ATCC BAA-161 / DSM 6008 / Z-2901).